The following is a 144-amino-acid chain: Transcriptional regulator SlyA (144 aa).

Residues 2 to 135 (ESPLGSDLAR…LLHLIRKLEQ (134 aa)) form the HTH marR-type domain. Positions 49 to 72 (QIQLAKAIGIEQPSLVRTLDQLEE) form a DNA-binding region, H-T-H motif.

Belongs to the SlyA family. As to quaternary structure, homodimer.

Transcription regulator that can specifically activate or repress expression of target genes. This chain is Transcriptional regulator SlyA, found in Klebsiella pneumoniae (strain 342).